We begin with the raw amino-acid sequence, 1730 residues long: Nebulin-related-anchoring protein (1730 aa).

An LIM zinc-binding domain is found at 4 to 64 (QPCSRCGYGV…HAHNPKNNTF (61 aa)). Nebulin repeat units lie at residues 63–97 (TFTS…QCKS), 156–166 (EYTEDYEQPRG), 175–202 (TPAY…ERIS), 203–237 (RFST…QQRG), 246–273 (TPAY…KEMR), 298–307 (YPEEYEEHRG), 316–343 (TPAY…KMKG), 348–382 (HSLP…SSRG), 389–417 (ETPQ…NHMR), 419–453 (RYEG…HDIV), 487–521 (KYSS…KNKL), 522–556 (NYTL…KTKG), 558–592 (GFEM…KTKG), 602–626 (LLHS…ESKT), 627–661 (RFHL…EYTV), 662–692 (LPED…WMKG), 702–724 (NLEQ…RVDE), 726–760 (KFTS…QSVH), 761–795 (QYTI…NQKA), 797–831 (GFEL…RSRG), 844–869 (QMSH…DTKS), 870–896 (QCHV…VGYK), 901–935 (HFTA…WMKG), 945–963 (NVEQ…KYRQ), 969–1003 (KFTS…NIKH), 1004–1038 (HYTP…KLRD), 1040–1074 (GYKL…KMKG), 1078–1112 (GSRS…HSKA), 1113–1139 (QFHL…QDYK), 1144–1178 (QYTS…FMRG), 1183–1206 (IPGT…KYRQ), 1212–1246 (KYTA…DARH), 1247–1281 (EYTM…NLRA), 1283–1317 (GYKL…KERG), 1321–1355 (GPQS…SSQA), 1356–1390 (QFHL…KFTA), 1391–1421 (LPED…GMKG), 1429–1449 (SPQM…KYRK), 1455–1481 (KFTT…RMYR), 1490–1524 (RYTL…QTRA), 1526–1560 (SYDF…RDRG), 1564–1598 (GYRS…KSRS), 1599–1626 (QFHS…HYRQ), and 1640–1664 (LRHA…LTRG). At Ser-1081 the chain carries Phosphoserine. Residues 1595–1620 (KSRSQFHSSTDQPGLLQAKRSQQLAS) are disordered. A compositionally biased stretch (polar residues) spans 1596 to 1606 (SRSQFHSSTDQ).

As to quaternary structure, interacts with actin, alpha-actinin, KLHL41, TLN1 and VCL. Interacts with CSRP3. Expressed in cardiac and skeletal muscle.

Its function is as follows. May be involved in anchoring the terminal actin filaments in the myofibril to the membrane and in transmitting tension from the myofibrils to the extracellular matrix. This is Nebulin-related-anchoring protein from Homo sapiens (Human).